Consider the following 397-residue polypeptide: Na(+)/H(+) antiporter NhaA 3 (397 aa).

A run of 11 helical transmembrane segments spans residues 18-38 (AGGILLIVAAALAMLLANSPF), 63-83 (LLLWTNDGLMAVFFLLVGLEL), 98-118 (IALPAVGAIGGMLVPALIYWW), 129-149 (GWAIPAATDIAFALGVLALLG), 158-178 (IFLTSIAVFDDIGAILIIAFF), 181-201 (SKISMLALVVAAICCAILFIC), 207-224 (TTLRAYLLIGLVMWVALL), 269-289 (VAFLILPIFAFANSGIRFIGM), 306-326 (LFFGKQLGVFLFCGVCVLFGW), 340-360 (GVAVLCGIGFTMSLFIGSLAF), and 373-393 (LGIVFGSLVSAVLGFVVLRSA).

It belongs to the NhaA Na(+)/H(+) (TC 2.A.33) antiporter family.

The protein resides in the cell inner membrane. The enzyme catalyses Na(+)(in) + 2 H(+)(out) = Na(+)(out) + 2 H(+)(in). Functionally, na(+)/H(+) antiporter that extrudes sodium in exchange for external protons. This is Na(+)/H(+) antiporter NhaA 3 from Saccharophagus degradans (strain 2-40 / ATCC 43961 / DSM 17024).